The following is an 809-amino-acid chain: Phospholipase D alpha 1 (809 aa).

A C2 domain is found at 1 to 125 (MAQILLHGTL…LDGHEIDKWV (125 aa)). Asp186 serves as a coordination point for Ca(2+). The PLD phosphodiesterase 1 domain maps to 326–365 (TMFTHHQKIVVVDSALPGGGGSDKRRIVSFVGGLDLCDGR). Active-site residues include His331, Lys333, and Asp338. His331 contributes to the a 1,2-diacyl-sn-glycero-3-phosphate binding site. Ca(2+) contacts are provided by His371 and His405. A 1,2-diacyl-sn-glycero-3-phosphate is bound by residues Gln521 and His660. The region spanning 655–682 (FMIYVHTKMMIVDDEYIIIGSANINQRS) is the PLD phosphodiesterase 2 domain. Active-site residues include His660, Lys662, and Asp667. Glu721 provides a ligand contact to Ca(2+).

This sequence belongs to the phospholipase D family. C2-PLD subfamily. It depends on Ca(2+) as a cofactor.

It catalyses the reaction a 1,2-diacyl-sn-glycero-3-phosphocholine + H2O = a 1,2-diacyl-sn-glycero-3-phosphate + choline + H(+). In terms of biological role, hydrolyzes glycerol-phospholipids at the terminal phosphodiesteric bond. Plays an important role in various cellular processes. The polypeptide is Phospholipase D alpha 1 (PLD1) (Vigna unguiculata (Cowpea)).